The chain runs to 518 residues: 3-octaprenyl-4-hydroxybenzoate carboxy-lyase (518 aa).

N177 serves as a coordination point for Mn(2+). Prenylated FMN is bound by residues 180–182 (IYR), 194–196 (RWL), and 199–200 (RG). A Mn(2+)-binding site is contributed by E243. D318 acts as the Proton donor in catalysis.

Belongs to the UbiD family. Homohexamer. Requires prenylated FMN as cofactor. Mn(2+) is required as a cofactor.

Its subcellular location is the cell membrane. The enzyme catalyses a 4-hydroxy-3-(all-trans-polyprenyl)benzoate + H(+) = a 2-(all-trans-polyprenyl)phenol + CO2. It participates in cofactor biosynthesis; ubiquinone biosynthesis. Catalyzes the decarboxylation of 3-octaprenyl-4-hydroxy benzoate to 2-octaprenylphenol, an intermediate step in ubiquinone biosynthesis. In Burkholderia lata (strain ATCC 17760 / DSM 23089 / LMG 22485 / NCIMB 9086 / R18194 / 383), this protein is 3-octaprenyl-4-hydroxybenzoate carboxy-lyase.